Here is a 644-residue protein sequence, read N- to C-terminus: Exoribonuclease 2 (644 aa).

An RNB domain is found at 189–516 (RQDLTALNFV…NHRLLKAVIK (328 aa)). Positions 561–643 (NTRFAAEIID…ETRSIIARPA (83 aa)) constitute an S1 motif domain.

This sequence belongs to the RNR ribonuclease family. RNase II subfamily.

The protein resides in the cytoplasm. It catalyses the reaction Exonucleolytic cleavage in the 3'- to 5'-direction to yield nucleoside 5'-phosphates.. Functionally, involved in mRNA degradation. Hydrolyzes single-stranded polyribonucleotides processively in the 3' to 5' direction. This is Exoribonuclease 2 from Salmonella gallinarum (strain 287/91 / NCTC 13346).